The chain runs to 245 residues: Uridylate kinase (245 aa).

Residue 15-18 (KLSG) coordinates ATP. Positions 23 to 28 (GDEGFG) are involved in allosteric activation by GTP. Residue glycine 57 participates in UMP binding. Glycine 58 and arginine 62 together coordinate ATP. UMP-binding positions include aspartate 77 and 138-145 (TGNPFCTT). Positions 165, 171, and 174 each coordinate ATP.

This sequence belongs to the UMP kinase family. In terms of assembly, homohexamer.

The protein resides in the cytoplasm. The catalysed reaction is UMP + ATP = UDP + ADP. Its pathway is pyrimidine metabolism; CTP biosynthesis via de novo pathway; UDP from UMP (UMPK route): step 1/1. Allosterically activated by GTP. Inhibited by UTP. Catalyzes the reversible phosphorylation of UMP to UDP. This Shewanella sp. (strain W3-18-1) protein is Uridylate kinase.